The sequence spans 544 residues: Chaperonin GroEL (544 aa).

Residues 30 to 33, lysine 51, 87 to 91, glycine 415, and aspartate 495 contribute to the ATP site; these read TLGP and DGTTT.

Belongs to the chaperonin (HSP60) family. Forms a cylinder of 14 subunits composed of two heptameric rings stacked back-to-back. Interacts with the co-chaperonin GroES.

Its subcellular location is the cytoplasm. The enzyme catalyses ATP + H2O + a folded polypeptide = ADP + phosphate + an unfolded polypeptide.. Together with its co-chaperonin GroES, plays an essential role in assisting protein folding. The GroEL-GroES system forms a nano-cage that allows encapsulation of the non-native substrate proteins and provides a physical environment optimized to promote and accelerate protein folding. The sequence is that of Chaperonin GroEL from Neisseria meningitidis serogroup B (strain ATCC BAA-335 / MC58).